Consider the following 55-residue polypeptide: MAVPKKRTSISKKRIRKNIWKGKGSWAALKALSLGKSLSTGNSKSFFVRQKKNKS.

This sequence belongs to the bacterial ribosomal protein bL32 family.

It localises to the plastid. The protein resides in the chloroplast. In Daucus carota (Wild carrot), this protein is Large ribosomal subunit protein bL32c.